A 405-amino-acid chain; its full sequence is Coenzyme F420 hydrogenase subunit alpha (405 aa).

Residues Cys63, Cys66, Cys380, and Cys383 each coordinate Ni(2+).

The protein belongs to the [NiFe]/[NiFeSe] hydrogenase large subunit family. As to quaternary structure, heterocomplex of the form (alpha(1)beta(1)gamma(1))(8). Ni(2+) is required as a cofactor. The cofactor is iron-sulfur cluster. It depends on FAD as a cofactor.

It catalyses the reaction oxidized coenzyme F420-(gamma-L-Glu)(n) + H2 + H(+) = reduced coenzyme F420-(gamma-L-Glu)(n). Reduces the physiological low-potential two-electron acceptor coenzyme F420, and the artificial one-electron acceptor methylviologen. This is Coenzyme F420 hydrogenase subunit alpha (frhA) from Methanothermobacter thermautotrophicus (strain ATCC 29096 / DSM 1053 / JCM 10044 / NBRC 100330 / Delta H) (Methanobacterium thermoautotrophicum).